The sequence spans 277 residues: Bifunctional protein FolD (277 aa).

Residues 156–158, Ser-183, and Ile-224 contribute to the NADP(+) site; that span reads GRS.

The protein belongs to the tetrahydrofolate dehydrogenase/cyclohydrolase family. As to quaternary structure, homodimer.

The enzyme catalyses (6R)-5,10-methylene-5,6,7,8-tetrahydrofolate + NADP(+) = (6R)-5,10-methenyltetrahydrofolate + NADPH. The catalysed reaction is (6R)-5,10-methenyltetrahydrofolate + H2O = (6R)-10-formyltetrahydrofolate + H(+). It participates in one-carbon metabolism; tetrahydrofolate interconversion. Its function is as follows. Catalyzes the oxidation of 5,10-methylenetetrahydrofolate to 5,10-methenyltetrahydrofolate and then the hydrolysis of 5,10-methenyltetrahydrofolate to 10-formyltetrahydrofolate. The protein is Bifunctional protein FolD of Kosmotoga olearia (strain ATCC BAA-1733 / DSM 21960 / TBF 19.5.1).